A 147-amino-acid polypeptide reads, in one-letter code: Small ribosomal subunit protein uS12 (147 aa).

A disordered region spans residues 1–22; sequence MPTINQLVRKPRKSKIEKSDSP. Position 102 is a 3-methylthioaspartic acid (D102).

The protein belongs to the universal ribosomal protein uS12 family. In terms of assembly, part of the 30S ribosomal subunit. Contacts proteins S8 and S17. May interact with IF1 in the 30S initiation complex.

Functionally, with S4 and S5 plays an important role in translational accuracy. In terms of biological role, interacts with and stabilizes bases of the 16S rRNA that are involved in tRNA selection in the A site and with the mRNA backbone. Located at the interface of the 30S and 50S subunits, it traverses the body of the 30S subunit contacting proteins on the other side and probably holding the rRNA structure together. The combined cluster of proteins S8, S12 and S17 appears to hold together the shoulder and platform of the 30S subunit. This chain is Small ribosomal subunit protein uS12, found in Streptococcus pyogenes serotype M12 (strain MGAS2096).